The chain runs to 290 residues: Probable ECF RNA polymerase sigma factor SigI (290 aa).

The segment at 11–74 is sigma-70 factor domain-2; that stretch reads WRAHRAYLVD…LCLDHIKSAS (64 aa). The Polymerase core binding motif lies at 34-37; that stretch reads DMVQ. Positions 110–162 are sigma-70 factor domain-4_2; that stretch reads LALLIMLERLGPAERVVFVLHEIFGLPYQQIATTIGSQASTCRQLAHRARRKI. Positions 137–156 form a DNA-binding region, H-T-H motif; sequence YQQIATTIGSQASTCRQLAH.

It belongs to the sigma-70 factor family. ECF subfamily. As to quaternary structure, interacts transiently with the RNA polymerase catalytic core formed by RpoA, RpoB, RpoC and RpoZ (2 alpha, 1 beta, 1 beta' and 1 omega subunit) to form the RNA polymerase holoenzyme that can initiate transcription.

In terms of biological role, sigma factors are initiation factors that promote the attachment of RNA polymerase to specific initiation sites and are then released. Extracytoplasmic function (ECF) sigma factors are held in an inactive form by a cognate anti-sigma factor until released, although no anti-sigma factor is known for this protein. The protein is Probable ECF RNA polymerase sigma factor SigI (sigI) of Mycobacterium tuberculosis (strain CDC 1551 / Oshkosh).